The sequence spans 176 residues: NAD(P)H-quinone oxidoreductase subunit 6, chloroplastic (176 aa).

The next 5 helical transmembrane spans lie at 10–30 (FLLV…VLLT), 32–52 (PIYS…FYIL), 61–81 (AQLL…VMFM), 92–112 (LWTI…VSLI), and 152–172 (FFLP…GAIA).

This sequence belongs to the complex I subunit 6 family. In terms of assembly, NDH is composed of at least 16 different subunits, 5 of which are encoded in the nucleus.

The protein localises to the plastid. It localises to the chloroplast thylakoid membrane. The enzyme catalyses a plastoquinone + NADH + (n+1) H(+)(in) = a plastoquinol + NAD(+) + n H(+)(out). It carries out the reaction a plastoquinone + NADPH + (n+1) H(+)(in) = a plastoquinol + NADP(+) + n H(+)(out). NDH shuttles electrons from NAD(P)H:plastoquinone, via FMN and iron-sulfur (Fe-S) centers, to quinones in the photosynthetic chain and possibly in a chloroplast respiratory chain. The immediate electron acceptor for the enzyme in this species is believed to be plastoquinone. Couples the redox reaction to proton translocation, and thus conserves the redox energy in a proton gradient. This is NAD(P)H-quinone oxidoreductase subunit 6, chloroplastic (ndhG) from Gossypium hirsutum (Upland cotton).